The following is a 360-amino-acid chain: Photosystem II protein D1 (360 aa).

3 consecutive transmembrane segments (helical) span residues 29–46 (YVGW…TATT), 118–133 (QFLI…QWEL), and 142–156 (WICV…ARTA). Residue Tyr126 coordinates pheophytin a. Residues Asp170 and Glu189 each contribute to the [CaMn4O5] cluster site. Residues 197 to 218 (FHMLGVAGVFGGSLFSAMHGSL) traverse the membrane as a helical segment. His198 provides a ligand contact to chlorophyll a. A quinone-binding positions include His215 and 264-265 (SF). His215 contacts Fe cation. Residue His272 participates in Fe cation binding. A helical transmembrane segment spans residues 274 to 288 (FLGAWPVIGIWFTAM). [CaMn4O5] cluster-binding residues include His332, Glu333, Asp342, and Ala344. Residues 345 to 360 (SGEQAPVALTAPAING) constitute a propeptide that is removed on maturation.

Belongs to the reaction center PufL/M/PsbA/D family. In terms of assembly, PSII is composed of 1 copy each of membrane proteins PsbA, PsbB, PsbC, PsbD, PsbE, PsbF, PsbH, PsbI, PsbJ, PsbK, PsbL, PsbM, PsbT, PsbX, PsbY, PsbZ, Psb30/Ycf12, peripheral proteins PsbO, CyanoQ (PsbQ), PsbU, PsbV and a large number of cofactors. It forms dimeric complexes. Requires The D1/D2 heterodimer binds P680, chlorophylls that are the primary electron donor of PSII, and subsequent electron acceptors. It shares a non-heme iron and each subunit binds pheophytin, quinone, additional chlorophylls, carotenoids and lipids. D1 provides most of the ligands for the Mn4-Ca-O5 cluster of the oxygen-evolving complex (OEC). There is also a Cl(-1) ion associated with D1 and D2, which is required for oxygen evolution. The PSII complex binds additional chlorophylls, carotenoids and specific lipids. as cofactor. Post-translationally, tyr-161 forms a radical intermediate that is referred to as redox-active TyrZ, YZ or Y-Z. C-terminally processed by CtpA; processing is essential to allow assembly of the oxygen-evolving complex and thus photosynthetic growth.

Its subcellular location is the cellular thylakoid membrane. The catalysed reaction is 2 a plastoquinone + 4 hnu + 2 H2O = 2 a plastoquinol + O2. In terms of biological role, photosystem II (PSII) is a light-driven water:plastoquinone oxidoreductase that uses light energy to abstract electrons from H(2)O, generating O(2) and a proton gradient subsequently used for ATP formation. It consists of a core antenna complex that captures photons, and an electron transfer chain that converts photonic excitation into a charge separation. The D1/D2 (PsbA/PsbD) reaction center heterodimer binds P680, the primary electron donor of PSII as well as several subsequent electron acceptors. In Synechocystis sp. (strain PCC 6714) (Aphanocapsa sp. (strain PCC 6714)), this protein is Photosystem II protein D1.